A 729-amino-acid polypeptide reads, in one-letter code: Phosphoribosylformylglycinamidine synthase subunit PurL (729 aa).

Residue His-54 is part of the active site. ATP-binding residues include Tyr-57 and Lys-96. Mg(2+) is bound at residue Glu-98. Residues 99 to 102 (SHNH) and Arg-121 each bind substrate. His-100 functions as the Proton acceptor in the catalytic mechanism. Residue Asp-122 participates in Mg(2+) binding. Gln-245 contributes to the substrate binding site. Residue Asp-273 coordinates Mg(2+). 317–319 (ETQ) lines the substrate pocket. Positions 495 and 532 each coordinate ATP. A Mg(2+)-binding site is contributed by Asn-533. Ser-535 lines the substrate pocket.

The protein belongs to the FGAMS family. In terms of assembly, monomer. Part of the FGAM synthase complex composed of 1 PurL, 1 PurQ and 2 PurS subunits.

The protein localises to the cytoplasm. The catalysed reaction is N(2)-formyl-N(1)-(5-phospho-beta-D-ribosyl)glycinamide + L-glutamine + ATP + H2O = 2-formamido-N(1)-(5-O-phospho-beta-D-ribosyl)acetamidine + L-glutamate + ADP + phosphate + H(+). It functions in the pathway purine metabolism; IMP biosynthesis via de novo pathway; 5-amino-1-(5-phospho-D-ribosyl)imidazole from N(2)-formyl-N(1)-(5-phospho-D-ribosyl)glycinamide: step 1/2. In terms of biological role, part of the phosphoribosylformylglycinamidine synthase complex involved in the purines biosynthetic pathway. Catalyzes the ATP-dependent conversion of formylglycinamide ribonucleotide (FGAR) and glutamine to yield formylglycinamidine ribonucleotide (FGAM) and glutamate. The FGAM synthase complex is composed of three subunits. PurQ produces an ammonia molecule by converting glutamine to glutamate. PurL transfers the ammonia molecule to FGAR to form FGAM in an ATP-dependent manner. PurS interacts with PurQ and PurL and is thought to assist in the transfer of the ammonia molecule from PurQ to PurL. The protein is Phosphoribosylformylglycinamidine synthase subunit PurL of Staphylococcus epidermidis (strain ATCC 12228 / FDA PCI 1200).